The sequence spans 469 residues: Putative dipeptidase SE_1424 (469 aa).

His-84 contacts Zn(2+). The active site involves Asp-86. Asp-115 contacts Zn(2+). Glu-149 functions as the Proton acceptor in the catalytic mechanism. Residues Glu-150, Asp-173, and His-440 each contribute to the Zn(2+) site.

Belongs to the peptidase M20A family. Zn(2+) is required as a cofactor.

The polypeptide is Putative dipeptidase SE_1424 (Staphylococcus epidermidis (strain ATCC 12228 / FDA PCI 1200)).